Here is a 165-residue protein sequence, read N- to C-terminus: ATP synthase subunit b (165 aa).

A helical membrane pass occupies residues 7 to 27 (GTSLGNLLIVTGSFILLLLLV).

The protein belongs to the ATPase B chain family. In terms of assembly, F-type ATPases have 2 components, F(1) - the catalytic core - and F(0) - the membrane proton channel. F(1) has five subunits: alpha(3), beta(3), gamma(1), delta(1), epsilon(1). F(0) has three main subunits: a(1), b(2) and c(10-14). The alpha and beta chains form an alternating ring which encloses part of the gamma chain. F(1) is attached to F(0) by a central stalk formed by the gamma and epsilon chains, while a peripheral stalk is formed by the delta and b chains.

The protein localises to the cell membrane. In terms of biological role, f(1)F(0) ATP synthase produces ATP from ADP in the presence of a proton or sodium gradient. F-type ATPases consist of two structural domains, F(1) containing the extramembraneous catalytic core and F(0) containing the membrane proton channel, linked together by a central stalk and a peripheral stalk. During catalysis, ATP synthesis in the catalytic domain of F(1) is coupled via a rotary mechanism of the central stalk subunits to proton translocation. Component of the F(0) channel, it forms part of the peripheral stalk, linking F(1) to F(0). This is ATP synthase subunit b from Streptococcus mutans serotype c (strain ATCC 700610 / UA159).